We begin with the raw amino-acid sequence, 151 residues long: Aspartate carbamoyltransferase regulatory chain (151 aa).

Cys107, Cys112, Cys135, and Cys138 together coordinate Zn(2+).

It belongs to the PyrI family. As to quaternary structure, contains catalytic and regulatory chains. Requires Zn(2+) as cofactor.

Functionally, involved in allosteric regulation of aspartate carbamoyltransferase. In Thermococcus gammatolerans (strain DSM 15229 / JCM 11827 / EJ3), this protein is Aspartate carbamoyltransferase regulatory chain.